We begin with the raw amino-acid sequence, 130 residues long: Phosphoribosyl-AMP cyclohydrolase (130 aa).

D80 contacts Mg(2+). Position 81 (C81) interacts with Zn(2+). Mg(2+)-binding residues include D82 and D84. Zn(2+)-binding residues include C98 and C105.

The protein belongs to the PRA-CH family. Homodimer. The cofactor is Mg(2+). Zn(2+) is required as a cofactor.

The protein localises to the cytoplasm. It catalyses the reaction 1-(5-phospho-beta-D-ribosyl)-5'-AMP + H2O = 1-(5-phospho-beta-D-ribosyl)-5-[(5-phospho-beta-D-ribosylamino)methylideneamino]imidazole-4-carboxamide. The protein operates within amino-acid biosynthesis; L-histidine biosynthesis; L-histidine from 5-phospho-alpha-D-ribose 1-diphosphate: step 3/9. In terms of biological role, catalyzes the hydrolysis of the adenine ring of phosphoribosyl-AMP. The chain is Phosphoribosyl-AMP cyclohydrolase from Oleidesulfovibrio alaskensis (strain ATCC BAA-1058 / DSM 17464 / G20) (Desulfovibrio alaskensis).